The chain runs to 365 residues: 3-dehydroquinate synthase (365 aa).

Residues 69–74 (DGEAHK), 103–107 (GVIGD), 127–128 (TT), lysine 140, and lysine 149 contribute to the NAD(+) site. Zn(2+)-binding residues include glutamate 182, histidine 245, and histidine 262.

The protein belongs to the sugar phosphate cyclases superfamily. Dehydroquinate synthase family. NAD(+) is required as a cofactor. Co(2+) serves as cofactor. The cofactor is Zn(2+).

The protein localises to the cytoplasm. The enzyme catalyses 7-phospho-2-dehydro-3-deoxy-D-arabino-heptonate = 3-dehydroquinate + phosphate. The protein operates within metabolic intermediate biosynthesis; chorismate biosynthesis; chorismate from D-erythrose 4-phosphate and phosphoenolpyruvate: step 2/7. In terms of biological role, catalyzes the conversion of 3-deoxy-D-arabino-heptulosonate 7-phosphate (DAHP) to dehydroquinate (DHQ). The sequence is that of 3-dehydroquinate synthase from Pseudomonas putida (strain ATCC 47054 / DSM 6125 / CFBP 8728 / NCIMB 11950 / KT2440).